The sequence spans 232 residues: uncharacterized protein (232 aa).

This is an uncharacterized protein from Thermoproteus tenax (TTV1).